The following is a 428-amino-acid chain: Serine--tRNA ligase (428 aa).

L-serine is bound at residue threonine 235–glutamate 237. Arginine 266 to glutamate 268 contacts ATP. Glutamate 289 serves as a coordination point for L-serine. Glutamate 353–serine 356 is an ATP binding site. Serine 389 lines the L-serine pocket.

The protein belongs to the class-II aminoacyl-tRNA synthetase family. Type-1 seryl-tRNA synthetase subfamily. As to quaternary structure, homodimer. The tRNA molecule binds across the dimer.

It is found in the cytoplasm. It catalyses the reaction tRNA(Ser) + L-serine + ATP = L-seryl-tRNA(Ser) + AMP + diphosphate + H(+). It carries out the reaction tRNA(Sec) + L-serine + ATP = L-seryl-tRNA(Sec) + AMP + diphosphate + H(+). The protein operates within aminoacyl-tRNA biosynthesis; selenocysteinyl-tRNA(Sec) biosynthesis; L-seryl-tRNA(Sec) from L-serine and tRNA(Sec): step 1/1. In terms of biological role, catalyzes the attachment of serine to tRNA(Ser). Is also able to aminoacylate tRNA(Sec) with serine, to form the misacylated tRNA L-seryl-tRNA(Sec), which will be further converted into selenocysteinyl-tRNA(Sec). The chain is Serine--tRNA ligase from Psychromonas ingrahamii (strain DSM 17664 / CCUG 51855 / 37).